The sequence spans 808 residues: DNA ligase (808 aa).

A disordered region spans residues 1–30 (MSISDDISPVPPAPVSEPNAGQDAGQDAAP). The segment covering 18 to 30 (PNAGQDAGQDAAP) has biased composition (low complexity). Residues 61-65 (DAEYD), 110-111 (SL), and Asp141 contribute to the NAD(+) site. Lys143 acts as the N6-AMP-lysine intermediate in catalysis. Residues Arg164, Glu202, Lys334, and Lys358 each coordinate NAD(+). Positions 453, 456, 471, and 476 each coordinate Zn(2+). The region spanning 644 to 733 (EGSGPLAGLR…GGDVPEDGDG (90 aa)) is the BRCT domain. Residues 720-808 (LEGRGGDVPE…PRKKDQHSLL (89 aa)) are disordered. Over residues 727–742 (VPEDGDGAPGNEDEAP) the composition is skewed to acidic residues. A compositionally biased stretch (low complexity) spans 746–773 (ADVPAAPEVLADAPAAISADASSGVAPG). The segment covering 779 to 792 (DRADMTDRTVRTDS) has biased composition (basic and acidic residues).

Belongs to the NAD-dependent DNA ligase family. LigA subfamily. Requires Mg(2+) as cofactor. The cofactor is Mn(2+).

It carries out the reaction NAD(+) + (deoxyribonucleotide)n-3'-hydroxyl + 5'-phospho-(deoxyribonucleotide)m = (deoxyribonucleotide)n+m + AMP + beta-nicotinamide D-nucleotide.. Functionally, DNA ligase that catalyzes the formation of phosphodiester linkages between 5'-phosphoryl and 3'-hydroxyl groups in double-stranded DNA using NAD as a coenzyme and as the energy source for the reaction. It is essential for DNA replication and repair of damaged DNA. The chain is DNA ligase from Nitratidesulfovibrio vulgaris (strain DSM 19637 / Miyazaki F) (Desulfovibrio vulgaris).